The chain runs to 1411 residues: Zinc finger protein 609 (1411 aa).

8 disordered regions span residues 1–26 (MSLS…SGDE), 47–190 (QKLE…QPVP), 353–484 (PRFC…EPTV), 517–659 (AHAH…ARPI), 679–963 (ASPG…VIQQ), 1005–1125 (YEEQ…RQAE), 1153–1221 (KSED…LTQH), and 1270–1367 (GSKV…STHH). A phosphoserine mark is found at serine 358, serine 361, and serine 379. Polar residues predominate over residues 377–401 (PNSNTPVNETATASDSKGTSNSSKT). Threonine 381 bears the Phosphothreonine mark. Serine 413, serine 433, serine 446, serine 452, serine 467, and serine 470 each carry phosphoserine. The span at 423–437 (ASSTSEDVKASPSSA) shows a compositional bias: polar residues. Lysine 479 is covalently cross-linked (Glycyl lysine isopeptide (Lys-Gly) (interchain with G-Cter in SUMO2)). The C2H2-type zinc finger occupies 495 to 520 (IDCPHPNCNKKYKHINGLKYHQAHAH). The span at 519-529 (AHTDDDSKPEA) shows a compositional bias: basic and acidic residues. Serine 533 carries the phosphoserine modification. Positions 549-563 (NGASVSQKGSLSPAR) are enriched in polar residues. Serine 576 and serine 578 each carry phosphoserine. Basic and acidic residues predominate over residues 626–649 (SLERKCMEKEKCKKPSSLKPEKIP). A compositionally biased stretch (polar residues) spans 679–700 (ASPGSSSGLTATVAQAMPNSPQ). A compositionally biased stretch (basic residues) spans 726-736 (DKKKKDKKKKE). Serine 743 carries the post-translational modification Phosphoserine. Threonine 746 bears the Phosphothreonine mark. Residues 751–764 (CRAEEGKSPFRESS) show a composition bias toward basic and acidic residues. Phosphoserine is present on serine 758. Lysine 789 participates in a covalent cross-link: Glycyl lysine isopeptide (Lys-Gly) (interchain with G-Cter in SUMO2). Polar residues predominate over residues 798–844 (FTDNAPSPSIGGSSRLENTTPTQPLTPLHVVTQNGAEASSVKTNSPA). Serine 804 is subject to Phosphoserine. Phosphothreonine is present on threonine 823. Phosphoserine occurs at positions 842, 846, and 849. Residues 855 to 876 (GEGKVDSVKSKDAEQLVKEGAK) are compositionally biased toward basic and acidic residues. The span at 897 to 908 (SYYSPSYAQSSP) shows a compositional bias: low complexity. A compositionally biased stretch (basic and acidic residues) spans 926 to 950 (TKRDEEPESIEGKVKNDICEEKKPE). The segment covering 952–963 (SSSSQQPSVIQQ) has biased composition (low complexity). The segment covering 1020 to 1042 (GVDKKAEMGLKEREAALKEEWKQ) has biased composition (basic and acidic residues). Serine 1055 is modified (phosphoserine). Lysine 1061 participates in a covalent cross-link: Glycyl lysine isopeptide (Lys-Gly) (interchain with G-Cter in SUMO2). Composition is skewed to basic and acidic residues over residues 1097-1113 (LKVK…EASE), 1153-1187 (KSED…KEST), and 1195-1208 (TSEE…EPRP). Lysine 1153 is covalently cross-linked (Glycyl lysine isopeptide (Lys-Gly) (interchain with G-Cter in SUMO2)). The span at 1286–1296 (PSVTCKSSSES) shows a compositional bias: polar residues. Lysine 1297 participates in a covalent cross-link: Glycyl lysine isopeptide (Lys-Gly) (interchain with G-Cter in SUMO2). A compositionally biased stretch (gly residues) spans 1328-1337 (GCGVVGGGGS).

In terms of assembly, interacts (via N-terminus) with NIPBL. Interacts with INTS13; promoting association with the integrator complex. Isoform 1: Expressed in myoblasts and myotubes. Isoform 2: Expressed in myoblasts and myotubes, with a preference in undifferentiated myoblasts.

The protein localises to the nucleus. Functionally, transcription factor, which activates RAG1, and possibly RAG2, transcription. Through the regulation of RAG1/2 expression, may regulate thymocyte maturation. Along with NIPBL and the multiprotein complex Integrator, promotes cortical neuron migration during brain development by regulating the transcription of crucial genes in this process. Preferentially binds promoters containing paused RNA polymerase II. Up-regulates the expression of SEMA3A, NRP1, PLXND1 and GABBR2 genes, among others. In terms of biological role, involved in the regulation of myoblast proliferation during myogenesis. This chain is Zinc finger protein 609, found in Homo sapiens (Human).